Consider the following 115-residue polypeptide: MSQALGAYRNGLRAARVAFKGDLRMLMAARQQMRESMVNPPNPELPPDQQIKLMNDVAQFLRQNVVQGKRTKDDKYHLNIHKDTELGDNETIKTTKKTLAAQGGGCCGGGAGLYK.

The N-terminal 35 residues, 1 to 35 (MSQALGAYRNGLRAARVAFKGDLRMLMAARQQMRE), are a transit peptide targeting the mitochondrion.

Belongs to the complex I LYR family. MZM1 subfamily. In terms of assembly, interacts with RIP1.

The protein resides in the mitochondrion matrix. Assembly factor required for Rieske Fe-S protein RIP1 incorporation into the cytochrome b-c1 (CIII) complex. Functions as a chaperone, binding to this subunit within the mitochondrial matrix and stabilizing it prior to its translocation and insertion into the late CIII dimeric intermediate within the mitochondrial inner membrane. Modulates the mitochondrial matrix zinc pool. The polypeptide is Mitochondrial zinc maintenance protein 1, mitochondrial (MZM1) (Kluyveromyces lactis (strain ATCC 8585 / CBS 2359 / DSM 70799 / NBRC 1267 / NRRL Y-1140 / WM37) (Yeast)).